We begin with the raw amino-acid sequence, 278 residues long: Large ribosomal subunit protein uL2 (278 aa).

2 disordered regions span residues 27-58 and 224-278; these read STPEKSLVRPLHGKGGRNAHGRITTRHKGGGH and VVMN…GKKR. Over residues 37–58 the composition is skewed to basic residues; it reads LHGKGGRNAHGRITTRHKGGGH. A compositionally biased stretch (basic and acidic residues) spans 253-268; sequence PEGRTRKPNKPSDKLI. Basic residues predominate over residues 269–278; that stretch reads VRRRRTGKKR.

Belongs to the universal ribosomal protein uL2 family. In terms of assembly, part of the 50S ribosomal subunit. Forms a bridge to the 30S subunit in the 70S ribosome.

Functionally, one of the primary rRNA binding proteins. Required for association of the 30S and 50S subunits to form the 70S ribosome, for tRNA binding and peptide bond formation. It has been suggested to have peptidyltransferase activity; this is somewhat controversial. Makes several contacts with the 16S rRNA in the 70S ribosome. The polypeptide is Large ribosomal subunit protein uL2 (Mycobacterium sp. (strain KMS)).